A 507-amino-acid polypeptide reads, in one-letter code: ATP synthase subunit alpha, mitochondrial (507 aa).

171–178 (GDRQTGKT) contacts ATP.

This sequence belongs to the ATPase alpha/beta chains family. As to quaternary structure, F-type ATPases have 2 components, CF(1) - the catalytic core - and CF(0) - the membrane proton channel. CF(1) has five subunits: alpha(3), beta(3), gamma(1), delta(1), epsilon(1). CF(0) has three main subunits: a, b and c.

Its subcellular location is the mitochondrion. The protein localises to the mitochondrion inner membrane. In terms of biological role, mitochondrial membrane ATP synthase (F(1)F(0) ATP synthase or Complex V) produces ATP from ADP in the presence of a proton gradient across the membrane which is generated by electron transport complexes of the respiratory chain. F-type ATPases consist of two structural domains, F(1) - containing the extramembraneous catalytic core, and F(0) - containing the membrane proton channel, linked together by a central stalk and a peripheral stalk. During catalysis, ATP synthesis in the catalytic domain of F(1) is coupled via a rotary mechanism of the central stalk subunits to proton translocation. Subunits alpha and beta form the catalytic core in F(1). Rotation of the central stalk against the surrounding alpha(3)beta(3) subunits leads to hydrolysis of ATP in three separate catalytic sites on the beta subunits. Subunit alpha does not bear the catalytic high-affinity ATP-binding sites. The protein is ATP synthase subunit alpha, mitochondrial (ATPA) of Arabidopsis thaliana (Mouse-ear cress).